A 50-amino-acid chain; its full sequence is U2-ctenitoxin-Pk1a (50 aa).

Intrachain disulfides connect C1–C15, C8–C21, C12–C47, C14–C31, and C23–C29.

In terms of tissue distribution, expressed by the venom gland.

It is found in the secreted. Its function is as follows. Insecticidal neurotoxin that reversibly inhibits the N-methyl-D-aspartate (NMDA)-subtype of ionotropic glutamate receptor (GRIN) and inhibits inactivation of insect sodium channels (Nav). In vivo, is highly toxic to insects. The polypeptide is U2-ctenitoxin-Pk1a (Phoneutria keyserlingi (Brazilian wandering spider)).